Reading from the N-terminus, the 1676-residue chain is MNFQYLVKIVAGSYYNISSSILSKIINSVILAGLYYGFLTALALKTSYILLIRAMVSENQNHKAAATTGLILGQLGQFLSIYYAPLYIAFGRPYTLTVLTLIYFLVNLFGNNLDKNASSFGAYGNKIRTLEILCIFLNNLILQLLNTCIFPSSTLARVVNVYLFRCNNKMVFLISSFSAWLIGQILVLMCCKLVLGRGQNKNSIRALIKKYLVRNSMFFLVVNCLFGSSLFILTIQSLGRIPLPIPTQNLSEISRIEKREEERLKKSGVAKEGKSTEDEEDLSHEKDSFKKEPYSKLENEDEEIEKDIEQAIGTLLFDYKRWTRPFRYIKNNQFEQAVRNEMSQYFFGTQQSDGKSRICFTHPVNLSMFWKGISFLLRDKNYSNKLTRRWVQRNKKKLKSIKSDLVNRIRNLDNTIKIEFGTPRTRLCTCIHENETKQEYVPEEYDPLLAGCYRGRIKKEQAIFQKQENETLTNPLDTLIDVLENNTNTQLFKANPIGKQKISFEEELRKKVPRWSYKLITELEQISYYRNPPDDHDIRTRKAKSLVVFDPSKHPNMETMEDSGNIQNKSSDKTINPQNNLTNSKTRTSENDPDDNTTEKEPKDDKSYSIRYSHQSDFRHGLIKDSMRSLRRKIVITDLFKGNVHSPLFFERRKKKNLFSFSGLLKLKQLFITWSAQKEFWDLKDSKKKLKIKDKKQQETKERIEIAEAWDSFELTQVLRGVLLVIQSSLRKDILLPSLIIIKNLGRILLFQTSEWSHDFEELEKETHVPCTYNGVPLGEKEFPRNWLTEGIQIKILSPFCLKPWNDEKKPLPASENFCFLTIWGQETDHIFGRPRRKPSFFKPILTKLDTSLKKINVVQFFKEKRTPESNIVKEQKVDDLSDNILNEFQFSKREKLEAITNRTNLIKTKLETIAKEKKTVTRDLDKNLSKKSLKQIKFKLVSNLSLFQYFLKLFIQKIYTLFLRNILLISGLLKKILNGEKEQLIDQYCSKNEKIKKVHKKFNFILNRKSKLSTNFSNLSQAYVFYKISQEMANFSVCKLRSILNQQVKAVFVKPEIKESFARYGLIQIQKMDKKNLQLRTRQWKHWLRVNSQHHLSHILWSSFGAKKENWRKKIKRCNKFNKQSLQKGNSKGNSNLDDSKNRNKNNLILNKNKKDNFEKCYRYDVLSSKFIKFEKKKTSLFHRSRISLTRQKQILYHKNMSQNFLFALPKNMLVKNLMGKSERIHIPYIEKDLDRKYLSFENIQFSLKKKVNIESWIPLTSRGNRTKTYNYELLDELELMKFIDQIYKKEKEFLFPCIERNKQIRNSKSKYSFIDWMGLNQKLLKHPVTNLELWFFPEFVSLLNIYKLKPWVLQSQLLLSKLTFNKLSSQQQNQTTTKINTETKNQQKNRVENEENKETENQQNAETKNKQKSKTENEENKETENQQNDESEDDPQLAYIRSFMKKHLLFQLRGESIFKKSGFKNIQILCLLLRLMNQNEMLFSSIQREKLNLHIMPEIGIKDLTLEVLEEIGVPEFLKEKRVNFEPFPLYINKNGKFLIYQLLNMSLVHKIKYPTNNESRNQGVITTQKNNNVASHIPENILSSRRRRELRILMCLNKKKKKCKGTEATNKSFSYKKKCAKIWEEQKSTIEFFIWPNSRFEDLTCMNRYWFYTNNGSRFSMLRIVMYLPLKNY.

6 helical membrane-spanning segments follow: residues 24–44 (KIIN…ALAL), 70–90 (LILG…YIAF), 93–113 (PYTL…GNNL), 130–150 (LEIL…TCIF), 170–190 (MVFL…VLMC), and 218–238 (FFLV…IQSL). Composition is skewed to basic and acidic residues over residues 264-276 (LKKS…GKST) and 283-298 (SHEK…SKLE). Disordered stretches follow at residues 264-302 (LKKS…NEDE), 546-610 (LVVF…SYSI), 1123-1151 (NKQS…NLIL), and 1372-1436 (QQQN…SEDD). The span at 562 to 586 (DSGNIQNKSSDKTINPQNNLTNSKT) shows a compositional bias: polar residues. Over residues 597–610 (TTEKEPKDDKSYSI) the composition is skewed to basic and acidic residues. Polar residues predominate over residues 1123 to 1138 (NKQSLQKGNSKGNSNL). Positions 1372-1390 (QQQNQTTTKINTETKNQQK) are enriched in low complexity. Residues 1384-1436 (ETKNQQKNRVENEENKETENQQNAETKNKQKSKTENEENKETENQQNDESEDD) adopt a coiled-coil conformation. 2 stretches are compositionally biased toward basic and acidic residues: residues 1391-1402 (NRVENEENKETE) and 1409-1426 (TKNK…KETE).

The protein belongs to the TIC214 family. As to quaternary structure, part of the Tic complex.

Its subcellular location is the plastid. It is found in the chloroplast inner membrane. Functionally, involved in protein precursor import into chloroplasts. May be part of an intermediate translocation complex acting as a protein-conducting channel at the inner envelope. In Cuscuta obtusiflora (Peruvian dodder), this protein is Protein TIC 214.